We begin with the raw amino-acid sequence, 176 residues long: MSGLFRGRVMTGLNVRIGQGYDVHAFGPGDHVMLGGVRVPHRCGVLAHSDGDVILHALCDAMLGALGLGDIGQHFPPSDVRWKGADSGVFVRHCHLLLRERDWCVGNVDATAICESPKIAPYVNAMREGIARLLEVQPECVSVKATTSEGLGFIGRGEGLAAQVVVLLYRLNGVVV.

A divalent metal cation contacts are provided by Asp22 and His24. 4-CDP-2-C-methyl-D-erythritol 2-phosphate is bound by residues 22–24 and 48–49; these read DVH and HS. His56 contacts a divalent metal cation. 4-CDP-2-C-methyl-D-erythritol 2-phosphate contacts are provided by residues 70–72, 146–149, Phe153, and Arg156; these read DIG and TTSE.

This sequence belongs to the IspF family. Homotrimer. Requires a divalent metal cation as cofactor.

The enzyme catalyses 4-CDP-2-C-methyl-D-erythritol 2-phosphate = 2-C-methyl-D-erythritol 2,4-cyclic diphosphate + CMP. Its pathway is isoprenoid biosynthesis; isopentenyl diphosphate biosynthesis via DXP pathway; isopentenyl diphosphate from 1-deoxy-D-xylulose 5-phosphate: step 4/6. Its function is as follows. Involved in the biosynthesis of isopentenyl diphosphate (IPP) and dimethylallyl diphosphate (DMAPP), two major building blocks of isoprenoid compounds. Catalyzes the conversion of 4-diphosphocytidyl-2-C-methyl-D-erythritol 2-phosphate (CDP-ME2P) to 2-C-methyl-D-erythritol 2,4-cyclodiphosphate (ME-CPP) with a corresponding release of cytidine 5-monophosphate (CMP). In Xylella fastidiosa (strain 9a5c), this protein is 2-C-methyl-D-erythritol 2,4-cyclodiphosphate synthase.